A 252-amino-acid chain; its full sequence is 3-dehydroquinate dehydratase (252 aa).

Residues E47–R49 and R83 contribute to the 3-dehydroquinate site. The active-site Proton donor/acceptor is H144. Catalysis depends on K171, which acts as the Schiff-base intermediate with substrate. Positions 213, 232, and 236 each coordinate 3-dehydroquinate.

It belongs to the type-I 3-dehydroquinase family. In terms of assembly, homodimer.

The catalysed reaction is 3-dehydroquinate = 3-dehydroshikimate + H2O. The protein operates within metabolic intermediate biosynthesis; chorismate biosynthesis; chorismate from D-erythrose 4-phosphate and phosphoenolpyruvate: step 3/7. Involved in the third step of the chorismate pathway, which leads to the biosynthesis of aromatic amino acids. Catalyzes the cis-dehydration of 3-dehydroquinate (DHQ) and introduces the first double bond of the aromatic ring to yield 3-dehydroshikimate. The protein is 3-dehydroquinate dehydratase of Lactiplantibacillus plantarum (strain ATCC BAA-793 / NCIMB 8826 / WCFS1) (Lactobacillus plantarum).